Consider the following 459-residue polypeptide: Alcohol acyl transferase 1 allele GSa (459 aa).

Active-site proton acceptor residues include histidine 164 and asparagine 385.

Belongs to the plant acyltransferase family. Highly expressed in the cortex and skin of ripe fruit.

The catalysed reaction is butan-1-ol + acetyl-CoA = butyl acetate + CoA. The enzyme catalyses butan-1-ol + butanoyl-CoA = butyl butanoate + CoA. It catalyses the reaction butan-1-ol + hexanoyl-CoA = butyl hexanoate + CoA. It carries out the reaction hexan-1-ol + butanoyl-CoA = hexyl butanoate + CoA. The catalysed reaction is hexan-1-ol + acetyl-CoA = hexyl acetate + CoA. The enzyme catalyses 2-methylbutan-1-ol + butanoyl-CoA = 2-methylbutyl butanoate + CoA. It catalyses the reaction ethanol + butanoyl-CoA = ethyl butanoate + CoA. It carries out the reaction hexanoyl-CoA + ethanol = ethyl hexanoate + CoA. In terms of biological role, involved in the biosynthesis of volatile esters which confer ripe apple fruit flavor. Alcohol acyl transferase that can use a wide range of alcohols as substrate, including 2-methylbutanol, hexanol and ethanol, to produce esters such as butyl butanoate, butyl hexanoate, hexyl butanoate, ethyl butanoate and ethyl hexanoate and, to some extent, 2-methylbutyl acetate (2MBA), butyl acetate, hexyl acetate and 2-methylbutyl butanoate (2MBB). The sequence is that of Alcohol acyl transferase 1 allele GSa from Malus domestica (Apple).